The following is a 457-amino-acid chain: NADH-quinone oxidoreductase subunit N (457 aa).

Helical transmembrane passes span 2–22 (NAIILISVLGILSMMSEFIGL), 25–45 (LIYPIILISLIGILGYNACTF), 60–80 (NYSVAFGSLLITITLFWFILF), 92–112 (GDHYALILFSTVGGLVLVSFS), 114–134 (MSMLFLGVEILSIPLYILAGS), 149–169 (FILGSFATGIMLLGIALIYGA), 188–208 (FFIGITLLSIAFAFKVSAVPF), 222–242 (FITAFMSTFVKVAAFGAFYLM), 253–273 (YLSHTLIGLSALTIVVGNIAA), 283–303 (LAFSGVSQAGYMLMVFPILTI), 310–330 (FVYLAGYAIANLIAIYIVQVV), 353–373 (AFVLSLSLISLAGIPPAAGFF), 382–402 (VIHAGNIYLVLIAILGSLISV), and 431–451 (VILAIMSALVVLIGLFPDILL).

It belongs to the complex I subunit 2 family. NDH-1 is composed of 14 different subunits. Subunits NuoA, H, J, K, L, M, N constitute the membrane sector of the complex.

Its subcellular location is the cell inner membrane. The catalysed reaction is a quinone + NADH + 5 H(+)(in) = a quinol + NAD(+) + 4 H(+)(out). Its function is as follows. NDH-1 shuttles electrons from NADH, via FMN and iron-sulfur (Fe-S) centers, to quinones in the respiratory chain. The immediate electron acceptor for the enzyme in this species is believed to be a menaquinone. Couples the redox reaction to proton translocation (for every two electrons transferred, four hydrogen ions are translocated across the cytoplasmic membrane), and thus conserves the redox energy in a proton gradient. The protein is NADH-quinone oxidoreductase subunit N of Cytophaga hutchinsonii (strain ATCC 33406 / DSM 1761 / CIP 103989 / NBRC 15051 / NCIMB 9469 / D465).